The sequence spans 400 residues: Probable glucan endo-1,6-beta-glucosidase B (400 aa).

The N-terminal stretch at 1–17 is a signal peptide; the sequence is MIRRLAALSALSGLATA. A glycan (N-linked (GlcNAc...) asparagine) is linked at N30. The Proton donor role is filled by E219. N272 carries N-linked (GlcNAc...) asparagine glycosylation. The active-site Nucleophile is E320.

This sequence belongs to the glycosyl hydrolase 5 (cellulase A) family.

The protein localises to the secreted. The catalysed reaction is Random hydrolysis of (1-&gt;6)-linkages in (1-&gt;6)-beta-D-glucans.. Beta-glucanases participate in the metabolism of beta-glucan, the main structural component of the cell wall. Acts on lutean, pustulan and 1,6-oligo-beta-D-glucosides. The polypeptide is Probable glucan endo-1,6-beta-glucosidase B (exgB) (Neosartorya fischeri (strain ATCC 1020 / DSM 3700 / CBS 544.65 / FGSC A1164 / JCM 1740 / NRRL 181 / WB 181) (Aspergillus fischerianus)).